The sequence spans 409 residues: Formyl-CoA:oxalate CoA-transferase (409 aa).

CoA is bound by residues Q17–S18, L71–K74, N95–G97, R103, and K135–E138. D167 functions as the Nucleophile in the catalytic mechanism. The segment at L221–P245 is disordered. G242–Q244 serves as a coordination point for substrate.

The protein belongs to the CoA-transferase III family. Frc subfamily. Homodimer.

It carries out the reaction formyl-CoA + oxalate = oxalyl-CoA + formate. It participates in metabolic intermediate degradation; oxalate degradation; CO(2) and formate from oxalate: step 1/2. In terms of biological role, involved in the catabolism of oxalate and in the adapatation to low pH via the induction of the oxalate-dependent acid tolerance response (ATR). Catalyzes the transfer of the CoA moiety from formyl-CoA to oxalate. The sequence is that of Formyl-CoA:oxalate CoA-transferase from Streptomyces avermitilis (strain ATCC 31267 / DSM 46492 / JCM 5070 / NBRC 14893 / NCIMB 12804 / NRRL 8165 / MA-4680).